Consider the following 493-residue polypeptide: Glutamyl-tRNA(Gln) amidotransferase subunit A (493 aa).

Catalysis depends on charge relay system residues Lys81 and Ser156. Residue Ser180 is the Acyl-ester intermediate of the active site.

Belongs to the amidase family. GatA subfamily. In terms of assembly, heterotrimer of A, B and C subunits.

The enzyme catalyses L-glutamyl-tRNA(Gln) + L-glutamine + ATP + H2O = L-glutaminyl-tRNA(Gln) + L-glutamate + ADP + phosphate + H(+). Allows the formation of correctly charged Gln-tRNA(Gln) through the transamidation of misacylated Glu-tRNA(Gln) in organisms which lack glutaminyl-tRNA synthetase. The reaction takes place in the presence of glutamine and ATP through an activated gamma-phospho-Glu-tRNA(Gln). The chain is Glutamyl-tRNA(Gln) amidotransferase subunit A from Mycobacterium ulcerans (strain Agy99).